The following is a 645-amino-acid chain: 1-deoxy-D-xylulose-5-phosphate synthase 1 (645 aa).

Thiamine diphosphate is bound by residues His-79 and Gly-120–Ser-122. Asp-151 contacts Mg(2+). Residues Gly-152 to Ser-153, Asn-180, Tyr-291, and Glu-373 contribute to the thiamine diphosphate site. Asn-180 contacts Mg(2+).

This sequence belongs to the transketolase family. DXPS subfamily. In terms of assembly, homodimer. Requires Mg(2+) as cofactor. It depends on thiamine diphosphate as a cofactor.

The catalysed reaction is D-glyceraldehyde 3-phosphate + pyruvate + H(+) = 1-deoxy-D-xylulose 5-phosphate + CO2. It functions in the pathway metabolic intermediate biosynthesis; 1-deoxy-D-xylulose 5-phosphate biosynthesis; 1-deoxy-D-xylulose 5-phosphate from D-glyceraldehyde 3-phosphate and pyruvate: step 1/1. Its function is as follows. Catalyzes the acyloin condensation reaction between C atoms 2 and 3 of pyruvate and glyceraldehyde 3-phosphate to yield 1-deoxy-D-xylulose-5-phosphate (DXP). The polypeptide is 1-deoxy-D-xylulose-5-phosphate synthase 1 (Rhodospirillum rubrum (strain ATCC 11170 / ATH 1.1.1 / DSM 467 / LMG 4362 / NCIMB 8255 / S1)).